Consider the following 301-residue polypeptide: Tyrosine recombinase XerC (301 aa).

One can recognise a Core-binding (CB) domain in the interval 2 to 84; the sequence is TNTQFYITNF…TLRSFFSYLY (83 aa). The Tyr recombinase domain occupies 105–291; that stretch reads ALPKFLTVDD…DLKHLIEVYD (187 aa). Active-site residues include arginine 145, lysine 169, histidine 243, arginine 246, and histidine 269. Tyrosine 278 (O-(3'-phospho-DNA)-tyrosine intermediate) is an active-site residue.

This sequence belongs to the 'phage' integrase family. XerC subfamily. As to quaternary structure, forms a cyclic heterotetrameric complex composed of two molecules of XerC and two molecules of XerD.

It is found in the cytoplasm. In terms of biological role, site-specific tyrosine recombinase, which acts by catalyzing the cutting and rejoining of the recombining DNA molecules. The XerC-XerD complex is essential to convert dimers of the bacterial chromosome into monomers to permit their segregation at cell division. It also contributes to the segregational stability of plasmids. This Thermodesulfovibrio yellowstonii (strain ATCC 51303 / DSM 11347 / YP87) protein is Tyrosine recombinase XerC.